A 318-amino-acid polypeptide reads, in one-letter code: Acetyl-coenzyme A carboxylase carboxyl transferase subunit alpha (318 aa).

In terms of domain architecture, CoA carboxyltransferase C-terminal spans 41-295; it reads RLTTKSQELT…KRQLIADLGS (255 aa).

The protein belongs to the AccA family. As to quaternary structure, acetyl-CoA carboxylase is a heterohexamer composed of biotin carboxyl carrier protein (AccB), biotin carboxylase (AccC) and two subunits each of ACCase subunit alpha (AccA) and ACCase subunit beta (AccD).

It localises to the cytoplasm. The enzyme catalyses N(6)-carboxybiotinyl-L-lysyl-[protein] + acetyl-CoA = N(6)-biotinyl-L-lysyl-[protein] + malonyl-CoA. It functions in the pathway lipid metabolism; malonyl-CoA biosynthesis; malonyl-CoA from acetyl-CoA: step 1/1. Component of the acetyl coenzyme A carboxylase (ACC) complex. First, biotin carboxylase catalyzes the carboxylation of biotin on its carrier protein (BCCP) and then the CO(2) group is transferred by the carboxyltransferase to acetyl-CoA to form malonyl-CoA. The sequence is that of Acetyl-coenzyme A carboxylase carboxyl transferase subunit alpha from Idiomarina loihiensis (strain ATCC BAA-735 / DSM 15497 / L2-TR).